The following is a 349-amino-acid chain: Phosphoribosylformylglycinamidine cyclo-ligase (349 aa).

The protein belongs to the AIR synthase family.

It localises to the cytoplasm. The catalysed reaction is 2-formamido-N(1)-(5-O-phospho-beta-D-ribosyl)acetamidine + ATP = 5-amino-1-(5-phospho-beta-D-ribosyl)imidazole + ADP + phosphate + H(+). The protein operates within purine metabolism; IMP biosynthesis via de novo pathway; 5-amino-1-(5-phospho-D-ribosyl)imidazole from N(2)-formyl-N(1)-(5-phospho-D-ribosyl)glycinamide: step 2/2. The polypeptide is Phosphoribosylformylglycinamidine cyclo-ligase (Bordetella petrii (strain ATCC BAA-461 / DSM 12804 / CCUG 43448)).